The primary structure comprises 527 residues: Rhamnogalacturonate lyase A (527 aa).

An N-terminal signal peptide occupies residues M1–A20. 2 N-linked (GlcNAc...) asparagine glycosylation sites follow: N27 and N46. Disulfide bonds link C50/C93 and C184/C193. N-linked (GlcNAc...) asparagine glycosylation is present at N351.

Belongs to the polysaccharide lyase 4 family.

It is found in the secreted. It catalyses the reaction Endotype eliminative cleavage of L-alpha-rhamnopyranosyl-(1-&gt;4)-alpha-D-galactopyranosyluronic acid bonds of rhamnogalacturonan I domains in ramified hairy regions of pectin leaving L-rhamnopyranose at the reducing end and 4-deoxy-4,5-unsaturated D-galactopyranosyluronic acid at the non-reducing end.. Its function is as follows. Pectinolytic enzymes consist of four classes of enzymes: pectin lyase, polygalacturonase, pectin methylesterase and rhamnogalacturonase. Degrades the rhamnogalacturonan I (RG-I) backbone of pectin. Active against linseed rhamnogalacturonan. The chain is Rhamnogalacturonate lyase A (rglA) from Emericella nidulans (strain FGSC A4 / ATCC 38163 / CBS 112.46 / NRRL 194 / M139) (Aspergillus nidulans).